The chain runs to 336 residues: Phosphoribosylformylglycinamidine cyclo-ligase (336 aa).

It belongs to the AIR synthase family.

Its subcellular location is the cytoplasm. The catalysed reaction is 2-formamido-N(1)-(5-O-phospho-beta-D-ribosyl)acetamidine + ATP = 5-amino-1-(5-phospho-beta-D-ribosyl)imidazole + ADP + phosphate + H(+). Its pathway is purine metabolism; IMP biosynthesis via de novo pathway; 5-amino-1-(5-phospho-D-ribosyl)imidazole from N(2)-formyl-N(1)-(5-phospho-D-ribosyl)glycinamide: step 2/2. The protein is Phosphoribosylformylglycinamidine cyclo-ligase of Thermoanaerobacter pseudethanolicus (strain ATCC 33223 / 39E) (Clostridium thermohydrosulfuricum).